The chain runs to 348 residues: UDP-3-O-acylglucosamine N-acyltransferase (348 aa).

The active-site Proton acceptor is the His-241.

This sequence belongs to the transferase hexapeptide repeat family. LpxD subfamily. Homotrimer.

It carries out the reaction a UDP-3-O-[(3R)-3-hydroxyacyl]-alpha-D-glucosamine + a (3R)-hydroxyacyl-[ACP] = a UDP-2-N,3-O-bis[(3R)-3-hydroxyacyl]-alpha-D-glucosamine + holo-[ACP] + H(+). The protein operates within bacterial outer membrane biogenesis; LPS lipid A biosynthesis. Catalyzes the N-acylation of UDP-3-O-acylglucosamine using 3-hydroxyacyl-ACP as the acyl donor. Is involved in the biosynthesis of lipid A, a phosphorylated glycolipid that anchors the lipopolysaccharide to the outer membrane of the cell. The sequence is that of UDP-3-O-acylglucosamine N-acyltransferase from Neisseria meningitidis serogroup B (strain ATCC BAA-335 / MC58).